The primary structure comprises 371 residues: Flagellar P-ring protein 1 (371 aa).

The first 19 residues, 1-19 (MRRALLLAALLACAPPAFA), serve as a signal peptide directing secretion.

The protein belongs to the FlgI family. The basal body constitutes a major portion of the flagellar organelle and consists of four rings (L,P,S, and M) mounted on a central rod.

Its subcellular location is the periplasm. The protein localises to the bacterial flagellum basal body. Functionally, assembles around the rod to form the L-ring and probably protects the motor/basal body from shearing forces during rotation. This is Flagellar P-ring protein 1 from Cereibacter sphaeroides (strain ATCC 17023 / DSM 158 / JCM 6121 / CCUG 31486 / LMG 2827 / NBRC 12203 / NCIMB 8253 / ATH 2.4.1.) (Rhodobacter sphaeroides).